The following is a 149-amino-acid chain: Natriuretic peptides A (149 aa).

The signal sequence occupies residues 1–23 (MGSPIAASFLLFLAVQLLGQTGA). Propeptides lie at residues 24-121 (NPVY…AAPR) and 91-101 (DGGALGRSPWD). Residues 49 to 103 (MPLEDEAESPQALSEQNAEAGAALSPLPEVPPWTGEVSPAQRDGGALGRSPWDSS) form a disordered region. Position 127 is a phosphoserine (S127). A disulfide bridge connects residues C128 and C144. Residues 145–149 (NSFRY) are important for degradation of atrial natriuretic peptide by IDE.

Belongs to the natriuretic peptide family. As to quaternary structure, homodimer; disulfide-linked antiparallel dimer. The precursor molecule is proteolytically cleaved by CORIN at Arg-121 to produce the atrial natriuretic peptide. Undergoes further proteolytic cleavage by unknown proteases to give rise to long-acting natriuretic peptide, vessel dilator and kaliuretic peptide. Additional processing gives rise to the auriculin and atriopeptin peptides. In the kidneys, alternative processing by an unknown protease results in the peptide urodilatin. In terms of processing, cleavage by MME initiates degradation of the factor and thereby regulates its activity. Degradation by IDE results in reduced activation of NPR1 (in vitro). During IDE degradation, the resulting products can temporarily stimulate NPR2 to produce cGMP, before the fragments are completely degraded and inactivated by IDE (in vitro). Post-translationally, degraded by IDE. Phosphorylation on Ser-127 decreases vasorelaxant activity.

The protein localises to the secreted. The protein resides in the perikaryon. Its subcellular location is the cell projection. In terms of biological role, hormone that plays a key role in mediating cardio-renal homeostasis, and is involved in vascular remodeling and regulating energy metabolism. Acts by specifically binding and stimulating NPR1 to produce cGMP, which in turn activates effector proteins, such as PRKG1, that drive various biological responses. Regulates vasodilation, natriuresis, diuresis and aldosterone synthesis and is therefore essential for regulating blood pressure, controlling the extracellular fluid volume and maintaining the fluid-electrolyte balance. Also involved in inhibiting cardiac remodeling and cardiac hypertrophy by inducing cardiomyocyte apoptosis and attenuating the growth of cardiomyocytes and fibroblasts. Plays a role in female pregnancy by promoting trophoblast invasion and spiral artery remodeling in uterus, and thus prevents pregnancy-induced hypertension. In adipose tissue, acts in various cGMP- and PKG-dependent pathways to regulate lipid metabolism and energy homeostasis. This includes up-regulating lipid metabolism and mitochondrial oxygen utilization by activating the AMP-activated protein kinase (AMPK), and increasing energy expenditure by acting via MAPK11 to promote the UCP1-dependent thermogenesis of brown adipose tissue. Binds the clearance receptor NPR3 which removes the hormone from circulation. Functionally, may have a role in cardio-renal homeostasis through regulation of natriuresis, diuresis, vasodilation, and inhibiting aldosterone synthesis. In vitro, promotes the production of cGMP and induces vasodilation. May promote natriuresis, at least in part, by enhancing prostaglandin E2 synthesis resulting in the inhibition of renal Na+-K+-ATPase. However reports on the involvement of this peptide in mammal blood volume and blood pressure homeostasis are conflicting; according to a report, in vivo it is not sufficient to activate cGMP and does not inhibit collecting duct transport nor effect diuresis and natriuresis. Appears to bind to specific receptors that are distinct from the receptors bound by atrial natriuretic peptide and vessel dilator. Possibly enhances protein excretion in urine by decreasing proximal tubular protein reabsorption. May have a role in cardio-renal homeostasis through regulation of natriuresis, diuresis, and vasodilation. In vitro, promotes the production of cGMP and induces vasodilation. May promote natriuresis, at least in part, by enhancing prostaglandin E2 synthesis resulting in the inhibition of renal Na+-K+-ATPase. However reports on the involvement of this peptide in mammal blood volume and blood pressure homeostasis are conflicting; according to a report it is not sufficient to activate cGMP and does not inhibit collecting duct transport nor effect diuresis and natriuresis. Appears to bind to specific receptors that are distinct from the receptors bound by the atrial natriuretic and long-acting natriuretic peptides. Possibly functions in protein excretion in urine by maintaining the integrity of the proximal tubules and enhancing protein excretion by decreasing proximal tubular protein reabsorption. Its function is as follows. May have a role in cardio-renal homeostasis through regulation of diuresis and inhibiting aldosterone synthesis. In vitro, promotes the production of cGMP and induces vasodilation. May promote natriuresis, at least in part, by enhancing prostaglandin E2 synthesis resulting in the inhibition of renal Na+-K+-ATPase. May have a role in potassium excretion but not sodium excretion (natriuresis). Possibly enhances protein excretion in urine by decreasing proximal tubular protein reabsorption. In terms of biological role, hormone produced in the kidneys that appears to be important for maintaining cardio-renal homeostasis. Mediates vasodilation, natriuresis and diuresis primarily in the renal system, in order to maintain the extracellular fluid volume and control the fluid-electrolyte balance. Specifically binds and stimulates cGMP production by renal transmembrane receptors, likely NPR1. Urodilatin not ANP, may be the natriuretic peptide responsible for the regulation of sodium and water homeostasis in the kidney. Functionally, may have a role in cardio-renal homeostasis through regulation of natriuresis and vasodilation. In vivo promotes natriuresis and in vitro, vasodilates renal artery strips. May have a role in cardio-renal homeostasis through regulation of regulation of natriuresis and vasodilation. In vivo promotes natriuresis. In vitro, vasodilates intestinal smooth muscle but not smooth muscle strips. Its function is as follows. May have a role in cardio-renal homeostasis through regulation of natriuresis and vasodilation. In vivo promotes natriuresis. In vitro, selectively vasodilates intestinal and vascular smooth muscle strips. In terms of biological role, may have a role in cardio-renal homeostasis through regulation of natriuresis and vasodilation. In vivo promotes natriuresis. In vitro, selectively vasodilates intestinal smooth muscle but not vascular smooth muscle strips. The protein is Natriuretic peptides A (NPPA) of Canis lupus familiaris (Dog).